The chain runs to 344 residues: tRNA N6-adenosine threonylcarbamoyltransferase (344 aa).

Fe cation-binding residues include H111 and H115. Substrate is bound by residues 134-138 (LVSGG), D167, G180, and N273. Residue D301 participates in Fe cation binding.

The protein belongs to the KAE1 / TsaD family. Requires Fe(2+) as cofactor.

The protein localises to the cytoplasm. The enzyme catalyses L-threonylcarbamoyladenylate + adenosine(37) in tRNA = N(6)-L-threonylcarbamoyladenosine(37) in tRNA + AMP + H(+). In terms of biological role, required for the formation of a threonylcarbamoyl group on adenosine at position 37 (t(6)A37) in tRNAs that read codons beginning with adenine. Is involved in the transfer of the threonylcarbamoyl moiety of threonylcarbamoyl-AMP (TC-AMP) to the N6 group of A37, together with TsaE and TsaB. TsaD likely plays a direct catalytic role in this reaction. This is tRNA N6-adenosine threonylcarbamoyltransferase from Cupriavidus pinatubonensis (strain JMP 134 / LMG 1197) (Cupriavidus necator (strain JMP 134)).